The following is a 663-amino-acid chain: MNKTTSQEILKTNNCLEWLFEKIFKQLVPNKQELYDLPFSEIYSRTFCNSQIHQLIAESLKSTVIEIETYLTDKKFIEKFLFVSVRREYKFRIKKLHVQIMLKEYDKIEFLINSGYKVDFDSLKLACLNGSLDILNLLLKFYQKKLSSELLMYCSEFSHYDIYQLLTTKYNLYPNLSVFYRAVLSDSIEIVEDVSSNISANQQVMENAFKTNHTDIINLLLIRAKKDGTHIDRNLVVYPIMNCNFELLTILSNMNLIDWHVELYYSALLSGSMEMITYLEDKIDKINPDFHKKKILDSSHQSSGKNSLLLEDIIYEIDGKKYFSHTMNYAIQSGSVNVVDYIWSRGYGITVSNFITAIKQGSVEILERLCKWYHLKLPIYLIHYFSTKSYVTNKIAKAKVLIENKLLMINEPVQECIELYKKEETHIKLIEQPTQIVSDSKYDPDYLMQYSMFFIPMKGFKLNHRLITQIRINLQLNYMDSLVELYTRDRNYADKMILLNNLFLFGTIDQIKILYPLLKTKYCPDKPILMEIICKCEITKLCYLKNNRLLDNDVVQSLIPLVIMLENPLINALFSKLTTVNLIDKYIVLSNNVTLIRKWLNESPVIDKNQIKSLFLLDDTKITDSILSKYSVTICKHKEEFLDWCQEEDLLDTRQKIEKKYLK.

ANK repeat units lie at residues 91-118 (FRIK…GYKV), 119-148 (DFDS…KLSS), 200-229 (ANQQ…KDGT), 258-288 (DWHV…KINP), and 322-351 (YFSH…GITV).

The sequence is that of Putative ankyrin repeat protein R219 from Acanthamoeba polyphaga mimivirus (APMV).